A 277-amino-acid chain; its full sequence is Bifunctional protein FolD (277 aa).

NADP(+)-binding positions include 156–158, S183, and I224; that span reads GRS.

This sequence belongs to the tetrahydrofolate dehydrogenase/cyclohydrolase family. Homodimer.

It catalyses the reaction (6R)-5,10-methylene-5,6,7,8-tetrahydrofolate + NADP(+) = (6R)-5,10-methenyltetrahydrofolate + NADPH. It carries out the reaction (6R)-5,10-methenyltetrahydrofolate + H2O = (6R)-10-formyltetrahydrofolate + H(+). It participates in one-carbon metabolism; tetrahydrofolate interconversion. Its function is as follows. Catalyzes the oxidation of 5,10-methylenetetrahydrofolate to 5,10-methenyltetrahydrofolate and then the hydrolysis of 5,10-methenyltetrahydrofolate to 10-formyltetrahydrofolate. The chain is Bifunctional protein FolD from Kosmotoga olearia (strain ATCC BAA-1733 / DSM 21960 / TBF 19.5.1).